The sequence spans 435 residues: 3-phosphoshikimate 1-carboxyvinyltransferase (435 aa).

Positions 22, 23, and 27 each coordinate 3-phosphoshikimate. Lys22 serves as a coordination point for phosphoenolpyruvate. Gly94 and Arg122 together coordinate phosphoenolpyruvate. Residues Ser166, Gln168, Asp314, and Lys341 each coordinate 3-phosphoshikimate. Phosphoenolpyruvate is bound at residue Gln168. The active-site Proton acceptor is Asp314. 2 residues coordinate phosphoenolpyruvate: Arg345 and Arg388.

Belongs to the EPSP synthase family. As to quaternary structure, monomer.

It localises to the cytoplasm. The catalysed reaction is 3-phosphoshikimate + phosphoenolpyruvate = 5-O-(1-carboxyvinyl)-3-phosphoshikimate + phosphate. Its pathway is metabolic intermediate biosynthesis; chorismate biosynthesis; chorismate from D-erythrose 4-phosphate and phosphoenolpyruvate: step 6/7. Catalyzes the transfer of the enolpyruvyl moiety of phosphoenolpyruvate (PEP) to the 5-hydroxyl of shikimate-3-phosphate (S3P) to produce enolpyruvyl shikimate-3-phosphate and inorganic phosphate. This chain is 3-phosphoshikimate 1-carboxyvinyltransferase, found in Vesicomyosocius okutanii subsp. Calyptogena okutanii (strain HA).